The sequence spans 215 residues: Ribonuclease HII (215 aa).

The RNase H type-2 domain maps to 24–215 (GVVFGVDEVG…PIRQFYENVD (192 aa)). The a divalent metal cation site is built by aspartate 30, glutamate 31, and aspartate 125.

This sequence belongs to the RNase HII family. The cofactor is Mn(2+). Mg(2+) serves as cofactor.

It localises to the cytoplasm. It catalyses the reaction Endonucleolytic cleavage to 5'-phosphomonoester.. Endonuclease that specifically degrades the RNA of RNA-DNA hybrids. This chain is Ribonuclease HII, found in Zymomonas mobilis subsp. mobilis (strain ATCC 31821 / ZM4 / CP4).